The chain runs to 234 residues: Glutathione S-transferase U11 (234 aa).

The GST N-terminal domain occupies 11 to 90; the sequence is EYVKLLGAWP…YVDETWLSGP (80 aa). Glutathione contacts are provided by residues 21–22, 47–48, 61–62, and 74–75; these read SP, LS, QI, and ES. Residues 96–228 form the GST C-terminal domain; the sequence is DPFDRAVARF…KLVQFARLKF (133 aa).

This sequence belongs to the GST superfamily. Tau family.

The protein resides in the cytoplasm. The protein localises to the cytosol. The enzyme catalyses RX + glutathione = an S-substituted glutathione + a halide anion + H(+). May be involved in the conjugation of reduced glutathione to a wide number of exogenous and endogenous hydrophobic electrophiles and have a detoxification role against certain herbicides. This is Glutathione S-transferase U11 (GSTU11) from Arabidopsis thaliana (Mouse-ear cress).